Reading from the N-terminus, the 501-residue chain is ADP,ATP carrier protein 3 (501 aa).

The next 12 membrane-spanning stretches (helical) occupy residues 23–43 (LKLF…FGAL), 59–79 (IISF…TVLY), 90–110 (YIFY…AYII), 146–166 (YALM…LMFW), 183–203 (PVLG…LVFF), 227–247 (IILQ…MFLF), 293–313 (IALL…PWKA), 326–346 (VNFM…FMII), 361–381 (LLTP…IIFI), 383–403 (EIGT…VGAI), 446–466 (FGKS…PTAT), and 470–490 (IIIY…WNII).

Belongs to the ADP/ATP translocase tlc family.

Its subcellular location is the cell membrane. In terms of biological role, provides the rickettsial cell with host ATP in exchange for rickettsial ADP. This is an obligate exchange system. This energy acquiring activity is an important component of rickettsial parasitism. This Rickettsia typhi (strain ATCC VR-144 / Wilmington) protein is ADP,ATP carrier protein 3 (tlcC).